The following is a 478-amino-acid chain: Putative UDP-glucose flavonoid 3-O-glucosyltransferase 3 (478 aa).

It belongs to the UDP-glycosyltransferase family.

This is Putative UDP-glucose flavonoid 3-O-glucosyltransferase 3 from Fragaria ananassa (Strawberry).